The chain runs to 835 residues: Protein P (835 aa).

Residues 1–176 form a terminal protein domain (TP) region; sequence MPLSYQHFRK…FFGTPYTWEH (176 aa). Residues 177 to 334 form a spacer region; it reads KLQHGTQPVN…HCLHHIVKLL (158 aa). 2 disordered regions span residues 211 to 235 and 258 to 288; these read LGQK…WSRT and RHPS…PTSH. The polymerase/reverse transcriptase domain (RT) stretch occupies residues 335 to 680; the sequence is DDWGPCQHHG…YMHLYPVARQ (346 aa). Residues 345 to 590 enclose the Reverse transcriptase domain; it reads HHFIRIPRTP…KALNFMGYVI (246 aa). D417, D541, and D542 together coordinate Mg(2+).

The protein belongs to the hepadnaviridae P protein family.

It catalyses the reaction DNA(n) + a 2'-deoxyribonucleoside 5'-triphosphate = DNA(n+1) + diphosphate. It carries out the reaction Endonucleolytic cleavage to 5'-phosphomonoester.. Activated by host HSP70 and HSP40 in vitro to be able to bind the epsilon loop of the pgRNA. Because deletion of the RNase H region renders the protein partly chaperone-independent, the chaperones may be needed indirectly to relieve occlusion of the RNA-binding site by this domain. Inhibited by several reverse-transcriptase inhibitors: Lamivudine, Adefovir and Entecavir. In terms of biological role, multifunctional enzyme that converts the viral RNA genome into dsDNA in viral cytoplasmic capsids. This enzyme displays a DNA polymerase activity that can copy either DNA or RNA templates, and a ribonuclease H (RNase H) activity that cleaves the RNA strand of RNA-DNA heteroduplexes in a partially processive 3'- to 5'-endonucleasic mode. Neo-synthesized pregenomic RNA (pgRNA) are encapsidated together with the P protein, and reverse-transcribed inside the nucleocapsid. Initiation of reverse-transcription occurs first by binding the epsilon loop on the pgRNA genome, and is initiated by protein priming, thereby the 5'-end of (-)DNA is covalently linked to P protein. Partial (+)DNA is synthesized from the (-)DNA template and generates the relaxed circular DNA (RC-DNA) genome. After budding and infection, the RC-DNA migrates in the nucleus, and is converted into a plasmid-like covalently closed circular DNA (cccDNA). The activity of P protein does not seem to be necessary for cccDNA generation, and is presumably released from (+)DNA by host nuclear DNA repair machinery. In Woolly monkey hepatitis B virus (isolate Louisville) (WMHBV), this protein is Protein P.